A 782-amino-acid chain; its full sequence is Endonuclease MutS2 (782 aa).

336-343 lines the ATP pocket; that stretch reads GPNTGGKT. Residues 707-782 form the Smr domain; that stretch reads LDLRGYRYDE…GFGVTVVEIK (76 aa).

It belongs to the DNA mismatch repair MutS family. MutS2 subfamily. Homodimer. Binds to stalled ribosomes, contacting rRNA.

Functionally, endonuclease that is involved in the suppression of homologous recombination and thus may have a key role in the control of bacterial genetic diversity. In terms of biological role, acts as a ribosome collision sensor, splitting the ribosome into its 2 subunits. Detects stalled/collided 70S ribosomes which it binds and splits by an ATP-hydrolysis driven conformational change. Acts upstream of the ribosome quality control system (RQC), a ribosome-associated complex that mediates the extraction of incompletely synthesized nascent chains from stalled ribosomes and their subsequent degradation. Probably generates substrates for RQC. This is Endonuclease MutS2 from Staphylococcus saprophyticus subsp. saprophyticus (strain ATCC 15305 / DSM 20229 / NCIMB 8711 / NCTC 7292 / S-41).